The primary structure comprises 206 residues: Na(+)-translocating NADH-quinone reductase subunit E (206 aa).

6 consecutive transmembrane segments (helical) span residues 12 to 32 (AVFVENMALAFFLGMCTFLAV), 36 to 56 (ISSAIGLGIAVVVVLTITVPV), 85 to 105 (FLGLLSYIGVIAALVQILEMF), 118 to 138 (GVFLPLITVNCAILGASLFMV), 148 to 168 (VIYGAGAGVGWALAITALAGI), and 184 to 204 (LGITFITVGLMSLGFMSFSGI).

This sequence belongs to the NqrDE/RnfAE family. In terms of assembly, composed of six subunits; NqrA, NqrB, NqrC, NqrD, NqrE and NqrF.

It is found in the cell inner membrane. It carries out the reaction a ubiquinone + n Na(+)(in) + NADH + H(+) = a ubiquinol + n Na(+)(out) + NAD(+). In terms of biological role, NQR complex catalyzes the reduction of ubiquinone-1 to ubiquinol by two successive reactions, coupled with the transport of Na(+) ions from the cytoplasm to the periplasm. NqrA to NqrE are probably involved in the second step, the conversion of ubisemiquinone to ubiquinol. The protein is Na(+)-translocating NADH-quinone reductase subunit E of Chromohalobacter salexigens (strain ATCC BAA-138 / DSM 3043 / CIP 106854 / NCIMB 13768 / 1H11).